The following is a 74-amino-acid chain: Large ribosomal subunit protein bL31 (74 aa).

Residues Cys16, Cys18, Cys38, and Cys41 each coordinate Zn(2+).

It belongs to the bacterial ribosomal protein bL31 family. Type A subfamily. As to quaternary structure, part of the 50S ribosomal subunit. It depends on Zn(2+) as a cofactor.

Its function is as follows. Binds the 23S rRNA. This chain is Large ribosomal subunit protein bL31, found in Salinispora arenicola (strain CNS-205).